Here is a 494-residue protein sequence, read N- to C-terminus: Guanosine-5'-triphosphate,3'-diphosphate pyrophosphatase (494 aa).

The protein belongs to the GppA/Ppx family. GppA subfamily.

The enzyme catalyses guanosine 3'-diphosphate 5'-triphosphate + H2O = guanosine 3',5'-bis(diphosphate) + phosphate + H(+). Its pathway is purine metabolism; ppGpp biosynthesis; ppGpp from GTP: step 2/2. Catalyzes the conversion of pppGpp to ppGpp. Guanosine pentaphosphate (pppGpp) is a cytoplasmic signaling molecule which together with ppGpp controls the 'stringent response', an adaptive process that allows bacteria to respond to amino acid starvation, resulting in the coordinated regulation of numerous cellular activities. This chain is Guanosine-5'-triphosphate,3'-diphosphate pyrophosphatase, found in Escherichia coli O157:H7.